Reading from the N-terminus, the 209-residue chain is Adenylate kinase (209 aa).

Residue 59–64 participates in ATP binding; it reads GSGKRT. Residues 79–108 form an NMP region; that stretch reads SSGQVLTRGVESGSETSQLAHSYVSRGERV. Residues Ser80, 106–108, 135–138, and Gln142 contribute to the AMP site; these read ERV and GYPR. An LID region spans residues 172-205; sequence HRRYDPATNKXYHMLDNPPPGGRCRVMRTAPAEG. Arg173 provides a ligand contact to ATP.

This sequence belongs to the adenylate kinase family. Monomer.

The protein localises to the cytoplasm. The enzyme catalyses AMP + ATP = 2 ADP. Its function is as follows. Catalyzes the reversible transfer of the terminal phosphate group between ATP and AMP. Plays an important role in cellular energy homeostasis and in adenine nucleotide metabolism. The protein is Adenylate kinase of Trypanosoma brucei rhodesiense.